The chain runs to 141 residues: Ribonuclease P protein component (141 aa).

2 disordered regions span residues 37–56 (RTEEESNAAKTGDNPRVGFT) and 114–141 (RRITAKGERRSGGKRRTERPEPGPVNGK). Basic and acidic residues predominate over residues 114-124 (RRITAKGERRS).

Belongs to the RnpA family. As to quaternary structure, consists of a catalytic RNA component (M1 or rnpB) and a protein subunit.

It catalyses the reaction Endonucleolytic cleavage of RNA, removing 5'-extranucleotides from tRNA precursor.. Functionally, RNaseP catalyzes the removal of the 5'-leader sequence from pre-tRNA to produce the mature 5'-terminus. It can also cleave other RNA substrates such as 4.5S RNA. The protein component plays an auxiliary but essential role in vivo by binding to the 5'-leader sequence and broadening the substrate specificity of the ribozyme. The polypeptide is Ribonuclease P protein component (Brucella melitensis biotype 1 (strain ATCC 23456 / CCUG 17765 / NCTC 10094 / 16M)).